An 843-amino-acid polypeptide reads, in one-letter code: MAKPLTDSEKRKQISVRGLAGLGDVAEVRKSFNRHLHFTLVKDRNVATPRDYFFALAHTVRDHLVGRWIRTQQHYYERDPKRIYYLSLEFYMGRTLQNTMVNLGLQNACDEAIYQLGLDLEELEEIEEDAGLGNGGLGRLAACFLDSMATLGLAAYGYGIRYEFGIFNQKIVNGWQVEEADDWLRYGNPWEKARPEYMLPVHFYGRVEHTPDGVKWLDTQVVLAMPYDTPVPGYKNNTVNTMRLWSAKAPNDFKLQDFNVGDYIEAVLDRNLAENISRVLYPNDNFFEGKELRLKQEYFVVAATLQDIIRRFKSSKFGCRDPVRTCFETFPDKVAIQLNDTHPALSIPELMRILVDVEKVDWDKAWEITKKTCAYTNHTVLPEALERWPVSMFEKLLPRHLEIIYAINQRHLDHVAALFPGDVDRLRRMSVIEEGDCKRINMAHLCVIGSHAVNGVARIHSEIVKQSVFKDFYELEPEKFQNKTNGITPRRWLLLCNPGLADTIVEKIGEEFLTDLSQLKKLLPLVSDEVFIRDVAKVKQENKLKFSAFLEKEYKVKINPSSMFDVHVKRIHEYKRQLLNCLHVVTLYNRIKRDPAKAFVPRTVMIGGKAAPGYHMAKLIIKLVTSIGDVVNHDPVVGDRLKVIFLENYRVSLAEKVIPAADLSQQISTAGTEASGTGNMKFMLNGALTIGTMDGANVEMAEEAGAENLFIFGLRVEDVEALDRKGYNAREYYDHLPELKQAVDQISSGFFSPKEPDCFKDIVNMLMHHDRFKVFADYEAYMQCQAQVDQLYRNPKEWTKKVIRNIACSGKFSSDRTITEYAREIWGVEPSDLQIPPPNIPRD.

Position 2 is an N-acetylalanine (Ala-2). The residue at position 15 (Ser-15) is a Phosphoserine; by PHK; in form phosphorylase A. Residues Asp-43, Tyr-197, and Arg-310 each contribute to the AMP site. The residue at position 197 (Tyr-197) is a Phosphotyrosine. Tyr-473 carries the phosphotyrosine modification. Lys-569 is a binding site for pyridoxal 5'-phosphate. The segment at 677–678 is pyridoxal 5'-phosphate; the sequence is TG. Residue Lys-681 is modified to N6-(pyridoxal phosphate)lysine.

It belongs to the glycogen phosphorylase family. Homodimer. Dimers associate into a tetramer to form the enzymatically active phosphorylase A. Requires pyridoxal 5'-phosphate as cofactor. Post-translationally, phosphorylated. Phosphorylation of Ser-15 converts phosphorylase B (unphosphorylated) to phosphorylase A.

It carries out the reaction [(1-&gt;4)-alpha-D-glucosyl](n) + phosphate = [(1-&gt;4)-alpha-D-glucosyl](n-1) + alpha-D-glucose 1-phosphate. Its activity is regulated as follows. Activity of phosphorylase is controlled both by allosteric means (through the non-covalent binding of metabolites) and by covalent modification. Thus AMP allosterically activates, whereas ATP, ADP, and glucose-6-phosphate allosterically inhibit, phosphorylase B. Activated upon phosphorylation. In terms of biological role, glycogen phosphorylase that regulates glycogen mobilization. Phosphorylase is an important allosteric enzyme in carbohydrate metabolism. Enzymes from different sources differ in their regulatory mechanisms and in their natural substrates. However, all known phosphorylases share catalytic and structural properties. In Homo sapiens (Human), this protein is Glycogen phosphorylase, brain form.